The chain runs to 304 residues: MNGIIPLWKERGMTSHDCVFKLRKILHTKKVGHTGTLDPEVEGVLPICIGRATKLAEYVTDEGKVYVAEITLGKSTTTEDATGETVMTKELADISADELQAALTKLTGKITQIPPMFSAVKVNGKKLYEYARAGIEVERPSRQVDIYSLTRLNGEATLNEANPTFQLEISCGKGTYIRTLAVMIGELLGYPAHMSKLERTRSGFFKKEDCLTLAEIDEMMQASDSSFLYPLEKGIESMAKLVIDEEIHAKVLNGGLLPKSLFIEVENEPRAALIFNDKLTAIYKPHPEKNELWKPEKVIELHQA.

The Nucleophile role is filled by Asp38.

The protein belongs to the pseudouridine synthase TruB family. Type 1 subfamily.

The enzyme catalyses uridine(55) in tRNA = pseudouridine(55) in tRNA. Functionally, responsible for synthesis of pseudouridine from uracil-55 in the psi GC loop of transfer RNAs. The chain is tRNA pseudouridine synthase B from Listeria monocytogenes serotype 4b (strain F2365).